The chain runs to 258 residues: NAD kinase (258 aa).

Asp-45 acts as the Proton acceptor in catalysis. NAD(+) contacts are provided by residues 45-46 (DG), 117-118 (NE), Asp-147, Ala-155, 158-163 (TAYNYS), and Ala-182.

The protein belongs to the NAD kinase family. A divalent metal cation is required as a cofactor.

It is found in the cytoplasm. It carries out the reaction NAD(+) + ATP = ADP + NADP(+) + H(+). Its function is as follows. Involved in the regulation of the intracellular balance of NAD and NADP, and is a key enzyme in the biosynthesis of NADP. Catalyzes specifically the phosphorylation on 2'-hydroxyl of the adenosine moiety of NAD to yield NADP. The protein is NAD kinase of Xanthomonas campestris pv. campestris (strain 8004).